A 197-amino-acid chain; its full sequence is Putative methyltransferase Mtx subunit A (197 aa).

This sequence belongs to the MtrA family. As to quaternary structure, may be part of a complex composed of 3 subunits; MtxA, MtxH and MtxX.

The protein is Putative methyltransferase Mtx subunit A (mtxA) of Methanosarcina barkeri (strain Fusaro / DSM 804).